A 311-amino-acid polypeptide reads, in one-letter code: tRNA-cytidine(32) 2-sulfurtransferase (311 aa).

The PP-loop motif motif lies at 47 to 52; the sequence is SGGKDS. [4Fe-4S] cluster is bound by residues Cys122, Cys125, and Cys213.

It belongs to the TtcA family. Homodimer. It depends on Mg(2+) as a cofactor. Requires [4Fe-4S] cluster as cofactor.

It is found in the cytoplasm. The catalysed reaction is cytidine(32) in tRNA + S-sulfanyl-L-cysteinyl-[cysteine desulfurase] + AH2 + ATP = 2-thiocytidine(32) in tRNA + L-cysteinyl-[cysteine desulfurase] + A + AMP + diphosphate + H(+). It functions in the pathway tRNA modification. In terms of biological role, catalyzes the ATP-dependent 2-thiolation of cytidine in position 32 of tRNA, to form 2-thiocytidine (s(2)C32). The sulfur atoms are provided by the cysteine/cysteine desulfurase (IscS) system. In Escherichia coli (strain 55989 / EAEC), this protein is tRNA-cytidine(32) 2-sulfurtransferase.